A 641-amino-acid polypeptide reads, in one-letter code: MAGRINDEDVKAVRDAVPIDAVVSEYLQLRNAGGGNLKGLCPFHDEKSPSFQVSPSKGFFHCFGCQEGGDTITFVMKIDHLTFSEAVERLAGQAGITLRYEEGGYNPSHQRGERIRLVEAHKIAAQWYAEQLATGPEADTGRAFLADRGFDQAAAEHFGVGYSPQGWDHLTRFLRGKGFSDKELLLSGLSQEGRRGPIDRFRGRLMWPIRDIGGDVVGFGARKLYEADNGPKYLNTPDTAIYKKSQVLYGIDLAKKDIAKASRAVVVEGYTDVMACHLAGVTTAIATCGTAFGGDHIKILRRLLMDNGSARVIFTFDGDAAGQKAALRAFEDDQKFAAETYIAIAPDGMDPCDLRLAKGDDAVADLVEPRTPLFEFALRQIVARYDLDTPAGRAAALDEAAPVVARIKNSGAQHEVAVQLAGMLGILDTQFVVKRIAQLARWARDRGGKGPAPDQRQRGGGPQQQAGPMTATPRGPALNLRNPVFATERELLKLALQRPELVSPAFDAYGVDEFTAPPYAAVREAIMEAGGAEFGVQDPQDYLVRVREAAPDDTVRAMVTELAVEAIMLHRGVKGVDEVYAGAQLVTVRRRAVERRIRDITGRLTRLSGHGDPAELAAVQNELWILQQYDQNLREHGAAAL.

Residues 41–65 (CPFHDEKSPSFQVSPSKGFFHCFGC) form a CHC2-type zinc finger. One can recognise a Toprim domain in the interval 262–346 (SRAVVVEGYT…AAETYIAIAP (85 aa)). Residues E268, D317, and D319 each contribute to the Mg(2+) site. Residues 444–478 (RDRGGKGPAPDQRQRGGGPQQQAGPMTATPRGPAL) form a disordered region.

The protein belongs to the DnaG primase family. In terms of assembly, monomer. Interacts with DnaB. Zn(2+) serves as cofactor. Mg(2+) is required as a cofactor.

It carries out the reaction ssDNA + n NTP = ssDNA/pppN(pN)n-1 hybrid + (n-1) diphosphate.. Functionally, RNA polymerase that catalyzes the synthesis of short RNA molecules used as primers for DNA polymerase during DNA replication. This Streptomyces coelicolor (strain ATCC BAA-471 / A3(2) / M145) protein is DNA primase.